Here is a 221-residue protein sequence, read N- to C-terminus: UPF0319 protein CGSHiGG_02140 (221 aa).

The first 21 residues, 1-21 (MKLRAVVLGLATLCTSTATFA), serve as a signal peptide directing secretion.

The protein belongs to the UPF0319 family.

This chain is UPF0319 protein CGSHiGG_02140, found in Haemophilus influenzae (strain PittGG).